Here is a 196-residue protein sequence, read N- to C-terminus: ATP-dependent Clp protease proteolytic subunit (196 aa).

S96 acts as the Nucleophile in catalysis. Residue H121 is part of the active site.

Belongs to the peptidase S14 family. In terms of assembly, fourteen ClpP subunits assemble into 2 heptameric rings which stack back to back to give a disk-like structure with a central cavity, resembling the structure of eukaryotic proteasomes.

The protein localises to the cytoplasm. It carries out the reaction Hydrolysis of proteins to small peptides in the presence of ATP and magnesium. alpha-casein is the usual test substrate. In the absence of ATP, only oligopeptides shorter than five residues are hydrolyzed (such as succinyl-Leu-Tyr-|-NHMec, and Leu-Tyr-Leu-|-Tyr-Trp, in which cleavage of the -Tyr-|-Leu- and -Tyr-|-Trp bonds also occurs).. Its function is as follows. Cleaves peptides in various proteins in a process that requires ATP hydrolysis. Has a chymotrypsin-like activity. Plays a major role in the degradation of misfolded proteins. The polypeptide is ATP-dependent Clp protease proteolytic subunit (Streptococcus salivarius).